The following is a 335-amino-acid chain: NADH-quinone oxidoreductase subunit H (335 aa).

8 helical membrane-spanning segments follow: residues 12–32 (IIAVVKAIVVLLAVVVCGALL), 81–101 (VIFTLAPVVAMSALLIAFAVI), 114–134 (IGLLFFFAMAGLSVYAVLFAG), 154–174 (VSYEVFMGLALMGIVVQVGSF), 187–207 (LWFIIPQFFGFCTFFIAGVAV), 238–258 (FFVGEYIGIILISALLVTLFF), 270–290 (SLAFFWFALKTAFFIMLFILL), and 307–327 (WKFCLPLTLINLLVTAAIVLL).

Belongs to the complex I subunit 1 family. In terms of assembly, NDH-1 is composed of 13 different subunits. Subunits NuoA, H, J, K, L, M, N constitute the membrane sector of the complex.

It localises to the cell inner membrane. It catalyses the reaction a quinone + NADH + 5 H(+)(in) = a quinol + NAD(+) + 4 H(+)(out). Its function is as follows. NDH-1 shuttles electrons from NADH, via FMN and iron-sulfur (Fe-S) centers, to quinones in the respiratory chain. The immediate electron acceptor for the enzyme in this species is believed to be ubiquinone. Couples the redox reaction to proton translocation (for every two electrons transferred, four hydrogen ions are translocated across the cytoplasmic membrane), and thus conserves the redox energy in a proton gradient. This subunit may bind ubiquinone. This chain is NADH-quinone oxidoreductase subunit H, found in Pseudomonas syringae pv. tomato (strain ATCC BAA-871 / DC3000).